The sequence spans 1759 residues: Putative ATP-dependent RNA helicase TDRD12 (1759 aa).

Residues 74–153 form the Tudor 1 domain; it reads FQNLEQVWFS…KLSNTETRAV (80 aa). Over residues 480–495 the composition is skewed to low complexity; that stretch reads NSAASESSTKSSMDSS. A disordered region spans residues 480–506; it reads NSAASESSTKSSMDSSRISDEDDLSSD. Positions 611 to 789 constitute a Helicase ATP-binding domain; the sequence is WGTILRGLST…DFLEPIVLKA (179 aa). 624-631 provides a ligand contact to ATP; sequence SPPRSGKT. One can recognise a Helicase C-terminal domain in the interval 823–980; sequence NVLQFIDSVQ…NVPKILDEVS (158 aa). Residues 1335–1394 enclose the Tudor 2 domain; it reads GSNVGDIVLAKFPDDSMYERARIDHIYSEDKVKCFFVDQGDWRDVSTNDLATITENFITQ. One can recognise a CS domain in the interval 1618–1704; that stretch reads LSKPKICWSQ…LMCRNWLALT (87 aa).

As to quaternary structure, interacts (via Tudor domain 2) with Siwi. Component of the PET complex, at least composed of EXD1, SIWI, TDRD12 and piRNAs. In terms of tissue distribution, expressed in the yolk cells. Not detected in yolk granules.

The protein localises to the chromosome. It is found in the cytoplasm. Its subcellular location is the cytosol. It localises to the nucleus membrane. The enzyme catalyses ATP + H2O = ADP + phosphate + H(+). Probable ATP-binding RNA helicase required during spermatogenesis to repress transposable elements and preventing their mobilization, which is essential for the germline integrity. Acts via the piRNA metabolic process, which mediates the repression of transposable elements during meiosis by forming complexes composed of piRNAs and Piwi proteins and governs the methylation and subsequent repression of transposons. The polypeptide is Putative ATP-dependent RNA helicase TDRD12 (TDRD12) (Bombyx mori (Silk moth)).